We begin with the raw amino-acid sequence, 288 residues long: DegV domain-containing protein (288 aa).

The DegV domain occupies 3 to 282 (IAVMTDSTSY…SGGLGLGYVG (280 aa)). Positions 62 and 95 each coordinate hexadecanoate.

In terms of biological role, may bind long-chain fatty acids, such as palmitate, and may play a role in lipid transport or fatty acid metabolism. The protein is DegV domain-containing protein of Staphylococcus aureus.